The sequence spans 121 residues: Aspartate 1-decarboxylase (121 aa).

Serine 25 (schiff-base intermediate with substrate; via pyruvic acid) is an active-site residue. At serine 25 the chain carries Pyruvic acid (Ser). Residue threonine 57 coordinates substrate. Tyrosine 58 (proton donor) is an active-site residue. A substrate-binding site is contributed by 73 to 75 (GAA).

Belongs to the PanD family. Heterooctamer of four alpha and four beta subunits. The cofactor is pyruvate. Is synthesized initially as an inactive proenzyme, which is activated by self-cleavage at a specific serine bond to produce a beta-subunit with a hydroxyl group at its C-terminus and an alpha-subunit with a pyruvoyl group at its N-terminus.

It is found in the cytoplasm. It catalyses the reaction L-aspartate + H(+) = beta-alanine + CO2. It participates in cofactor biosynthesis; (R)-pantothenate biosynthesis; beta-alanine from L-aspartate: step 1/1. In terms of biological role, catalyzes the pyruvoyl-dependent decarboxylation of aspartate to produce beta-alanine. This chain is Aspartate 1-decarboxylase, found in Wolinella succinogenes (strain ATCC 29543 / DSM 1740 / CCUG 13145 / JCM 31913 / LMG 7466 / NCTC 11488 / FDC 602W) (Vibrio succinogenes).